Consider the following 545-residue polypeptide: Probable intron-encoded endonuclease 4 (545 aa).

The next 7 membrane-spanning stretches (helical) occupy residues 1 to 21, 30 to 50, 81 to 101, 119 to 139, 140 to 160, 177 to 197, and 200 to 220; these read MYLS…FFGR, LITC…FFEV, LTVA…IYSI, LFTF…MFVG, WEGV…RIAA, FLTI…YATV, and LAPY…LIGA. A ndh-5 exons 1 and 2 encoded region spans residues 1 to 239; the sequence is MYLSIIILPL…HVWLPMAMEG (239 aa). Residues 240-545 form a ndh-5 intron 2 encoded region; it reads FFSRAFLKLH…NNINKSDYNK (306 aa).

The protein in the N-terminal section; belongs to the complex I subunit 5 family. This sequence in the C-terminal section; belongs to the LAGLIDADG endonuclease family.

It is found in the mitochondrion membrane. Mitochondrial DNA endonuclease involved in intron homing. The chain is Probable intron-encoded endonuclease 4 from Neurospora crassa (strain ATCC 24698 / 74-OR23-1A / CBS 708.71 / DSM 1257 / FGSC 987).